Here is a 329-residue protein sequence, read N- to C-terminus: Putative glucose ABC transporter permease protein TsgC13 (329 aa).

7 helical membrane passes run Phe-3 to Leu-23, Gly-32 to Val-52, Trp-60 to Leu-80, Val-89 to Gly-109, Ala-139 to Leu-161, Leu-193 to Phe-213, and Leu-216 to Ala-236.

The protein belongs to the binding-protein-dependent transport system permease family. The complex is composed of two ATP-binding proteins (TsgD13), two transmembrane proteins (TsgB13 and TsgC13) and a solute-binding protein (TsgA13).

It is found in the cell membrane. Its function is as follows. Part of an ABC transporter complex involved in glucose import (Potential). Responsible for the translocation of the substrate across the membrane. The sequence is that of Putative glucose ABC transporter permease protein TsgC13 (tsgC13) from Haloferax volcanii (strain ATCC 29605 / DSM 3757 / JCM 8879 / NBRC 14742 / NCIMB 2012 / VKM B-1768 / DS2) (Halobacterium volcanii).